The primary structure comprises 377 residues: Endoplasmic reticulum-Golgi intermediate compartment protein 2 (377 aa).

Over 1-33 (MRRLNRRKTLSLVKELDAFPKVPDSYVETSASG) the chain is Cytoplasmic. Residues 34 to 54 (GTVSLIAFTTMALLTIMEFSV) traverse the membrane as a helical segment. Over 55 to 319 (YQDTWMKYEY…PFWQFFVRLC (265 aa)) the chain is Lumenal. The helical transmembrane segment at 320–340 (GIIGGIFSTTGMLHGIGKFIV) threads the bilayer. The Cytoplasmic portion of the chain corresponds to 341-377 (EIICCRFRLGSYKPVRSVPFADGHTDNHLPLLENNTH).

Belongs to the ERGIC family. In terms of assembly, may form a heteromeric complex composed of ERGIC1, ERGIC2 and ERGIC3. Interacts with ERGIC3, the interaction is required for the stable expression of both proteins. May interact with EEF1A1.

It is found in the endoplasmic reticulum-Golgi intermediate compartment membrane. It localises to the golgi apparatus. The protein localises to the cis-Golgi network membrane. The protein resides in the endoplasmic reticulum membrane. Its subcellular location is the cytoplasm. It is found in the nucleus. In terms of biological role, possible role in transport between endoplasmic reticulum and Golgi. This Mus musculus (Mouse) protein is Endoplasmic reticulum-Golgi intermediate compartment protein 2 (Ergic2).